We begin with the raw amino-acid sequence, 688 residues long: Bifunctional protein GAL10 (688 aa).

The segment at 1 to 346 (MSEDKYCLVT…TQDNPFGYQI (346 aa)) is galactowaldenase. 6-37 (YCLVTGGAGYIGSHTVVELCEAGYKCIVVDNL) contacts NAD(+). The interval 347 to 688 (KGVDSKFFGD…HKLSYTFRTL (342 aa)) is mutarotase. His-525 serves as the catalytic For mutarotase activity.

In the N-terminal section; belongs to the NAD(P)-dependent epimerase/dehydratase family. This sequence in the C-terminal section; belongs to the aldose epimerase family. NAD(+) is required as a cofactor.

It catalyses the reaction UDP-alpha-D-glucose = UDP-alpha-D-galactose. The enzyme catalyses alpha-D-glucose = beta-D-glucose. It functions in the pathway carbohydrate metabolism; galactose metabolism. Its pathway is carbohydrate metabolism; hexose metabolism. Functionally, mutarotase converts alpha-aldose to the beta-anomer. It is active on D-glucose, L-arabinose, D-xylose, D-galactose, maltose and lactose. This chain is Bifunctional protein GAL10 (GAL10), found in Kluyveromyces lactis (strain ATCC 8585 / CBS 2359 / DSM 70799 / NBRC 1267 / NRRL Y-1140 / WM37) (Yeast).